A 301-amino-acid chain; its full sequence is uncharacterized protein (301 aa).

Over residues 16–28 (EITEESEKTKTDL) the composition is skewed to basic and acidic residues. Positions 16–38 (EITEESEKTKTDLQKANTPNKTE) are disordered. Over residues 29-38 (QKANTPNKTE) the composition is skewed to polar residues. The region spanning 252 to 301 (KENVALKMLQRCGWKEGQGLGQHNQGIINPLHVEISGFVTETKHSKINDK) is the G-patch domain.

This is an uncharacterized protein from Schizosaccharomyces pombe (strain 972 / ATCC 24843) (Fission yeast).